The primary structure comprises 137 residues: uncharacterized protein (137 aa).

A run of 4 helical transmembrane segments spans residues 20–39 (YGKIGVATAMAVGAAVGYAV), 44–61 (WFITVIAVLAGVALLSLV), 86–105 (VEIFSIGAALSGAVMLALDL), and 109–131 (AALALEFAVCCVLVLYLIFYGYY).

It localises to the cell membrane. This is an uncharacterized protein from Archaeoglobus fulgidus (strain ATCC 49558 / DSM 4304 / JCM 9628 / NBRC 100126 / VC-16).